Reading from the N-terminus, the 94-residue chain is Large ribosomal subunit protein bL25 (94 aa).

Belongs to the bacterial ribosomal protein bL25 family. Part of the 50S ribosomal subunit; part of the 5S rRNA/L5/L18/L25 subcomplex. Contacts the 5S rRNA. Binds to the 5S rRNA independently of L5 and L18.

This is one of the proteins that binds to the 5S RNA in the ribosome where it forms part of the central protuberance. The sequence is that of Large ribosomal subunit protein bL25 from Erwinia tasmaniensis (strain DSM 17950 / CFBP 7177 / CIP 109463 / NCPPB 4357 / Et1/99).